The following is a 69-amino-acid chain: MLKMGVLLFTFLVLFPLTTLELDTDRPVERHAAIKQDLKPQERRGIRLHAPRDECCEPQWCDGACDCCS.

A signal peptide spans 1–20 (MLKMGVLLFTFLVLFPLTTL). A propeptide spanning residues 21 to 52 (ELDTDRPVERHAAIKQDLKPQERRGIRLHAPR) is cleaved from the precursor. 4-carboxyglutamate is present on residues E54 and E57. Intrachain disulfides connect C55–C67, C56–C65, and C61–C68. 4-hydroxyproline is present on P58.

As to expression, expressed by the venom duct.

The protein resides in the secreted. Its function is as follows. Iota-conotoxins bind to voltage-gated sodium channels and act as agonists by shifting the voltage-dependence of activation to more hyperpolarized levels. This toxin enhances tetrodotoxin-sensitive sodium current in rat dorsal root ganglion neurons. This chain is Iota-conotoxin LtIIIA, found in Conus litteratus (Lettered cone).